A 1151-amino-acid polypeptide reads, in one-letter code: ATP-dependent RNA helicase ddx46 (1151 aa).

Composition is skewed to basic and acidic residues over residues 1-26 (MDEY…DNRN) and 35-51 (YRDD…DRSH). Disordered regions lie at residues 1–138 (MDEY…SRFD), 166–224 (MYQQ…VFQQ), 287–358 (QELK…PLVN), and 424–449 (TSQM…DKTI). Residues 52-73 (YNNNNNNNNNNNNNNNNNNGNG) are compositionally biased toward low complexity. Over residues 81-90 (SSQNKYQNHH) the composition is skewed to polar residues. Composition is skewed to low complexity over residues 91 to 124 (QQSP…QPHI), 166 to 199 (MYQQ…FQHH), 207 to 224 (QPPV…VFQQ), and 291 to 339 (ASGS…TTSP). The span at 428–443 (IDDDEKLEEESEGEDD) shows a compositional bias: acidic residues. The Q motif signature appears at 509-537 (QSWAQAGLTEKVHLLLKKFQYEKPTSIQA). Residues 540 to 718 (IPAIMNGRDL…KKILNKPLEI (179 aa)) enclose the Helicase ATP-binding domain. Residue 553–560 (ARTGSGKT) participates in ATP binding. The short motif at 666–669 (DEAD) is the DEAD box element. One can recognise a Helicase C-terminal domain in the interval 729 to 890 (DIEQFVEVRP…KVPDELRKLN (162 aa)). The segment at 904-972 (LLAPTGFTGR…EKEKQLLSEK (69 aa)) is disordered. The segment covering 915 to 930 (HKFDAAEEDKKNIERK) has biased composition (basic and acidic residues). The span at 938–948 (IEEEEEEEDED) shows a compositional bias: acidic residues. Positions 949–972 (KEKAEKEKLAAASAEKEKQLLSEK) are enriched in basic and acidic residues.

This sequence belongs to the DEAD box helicase family. DDX46/PRP5 subfamily. Component of the 17S U2 SnRNP complex, a ribonucleoprotein complex that contains small nuclear RNA (snRNA) U2 and a number of specific proteins.

It localises to the nucleus speckle. It catalyses the reaction ATP + H2O = ADP + phosphate + H(+). Functionally, component of the 17S U2 SnRNP complex of the spliceosome, a large ribonucleoprotein complex that removes introns from transcribed pre-mRNAs. The chain is ATP-dependent RNA helicase ddx46 (helB1) from Dictyostelium discoideum (Social amoeba).